We begin with the raw amino-acid sequence, 297 residues long: 4-hydroxy-tetrahydrodipicolinate synthase (297 aa).

T50 contacts pyruvate. Catalysis depends on Y138, which acts as the Proton donor/acceptor. K166 functions as the Schiff-base intermediate with substrate in the catalytic mechanism. Residue I208 participates in pyruvate binding.

This sequence belongs to the DapA family. Homotetramer; dimer of dimers.

It localises to the cytoplasm. It catalyses the reaction L-aspartate 4-semialdehyde + pyruvate = (2S,4S)-4-hydroxy-2,3,4,5-tetrahydrodipicolinate + H2O + H(+). Its pathway is amino-acid biosynthesis; L-lysine biosynthesis via DAP pathway; (S)-tetrahydrodipicolinate from L-aspartate: step 3/4. Its function is as follows. Catalyzes the condensation of (S)-aspartate-beta-semialdehyde [(S)-ASA] and pyruvate to 4-hydroxy-tetrahydrodipicolinate (HTPA). This Haemophilus ducreyi (strain 35000HP / ATCC 700724) protein is 4-hydroxy-tetrahydrodipicolinate synthase.